A 224-amino-acid chain; its full sequence is Na(+)-translocating NADH-quinone reductase subunit D (224 aa).

The next 5 helical transmembrane spans lie at 43–63 (TVMA…ISMI), 67–87 (IPSS…VIVV), 104–124 (VFVG…AFAM), 132–152 (FFDG…LGFV), and 179–199 (NGLL…IWAL).

The protein belongs to the NqrDE/RnfAE family. As to quaternary structure, composed of six subunits; NqrA, NqrB, NqrC, NqrD, NqrE and NqrF.

The protein localises to the cell inner membrane. It catalyses the reaction a ubiquinone + n Na(+)(in) + NADH + H(+) = a ubiquinol + n Na(+)(out) + NAD(+). Functionally, NQR complex catalyzes the reduction of ubiquinone-1 to ubiquinol by two successive reactions, coupled with the transport of Na(+) ions from the cytoplasm to the periplasm. NqrA to NqrE are probably involved in the second step, the conversion of ubisemiquinone to ubiquinol. The chain is Na(+)-translocating NADH-quinone reductase subunit D from Pseudomonas aeruginosa (strain LESB58).